The following is a 436-amino-acid chain: Enolase (436 aa).

Glutamine 167 contacts (2R)-2-phosphoglycerate. Catalysis depends on glutamate 209, which acts as the Proton donor. Aspartate 246, glutamate 291, and aspartate 318 together coordinate Mg(2+). Residues lysine 343, arginine 372, serine 373, and lysine 394 each coordinate (2R)-2-phosphoglycerate. The Proton acceptor role is filled by lysine 343.

Belongs to the enolase family. Component of the RNA degradosome, a multiprotein complex involved in RNA processing and mRNA degradation. Mg(2+) is required as a cofactor.

It is found in the cytoplasm. It localises to the secreted. The protein localises to the cell surface. It carries out the reaction (2R)-2-phosphoglycerate = phosphoenolpyruvate + H2O. It functions in the pathway carbohydrate degradation; glycolysis; pyruvate from D-glyceraldehyde 3-phosphate: step 4/5. In terms of biological role, catalyzes the reversible conversion of 2-phosphoglycerate (2-PG) into phosphoenolpyruvate (PEP). It is essential for the degradation of carbohydrates via glycolysis. This chain is Enolase, found in Actinobacillus pleuropneumoniae serotype 3 (strain JL03).